Reading from the N-terminus, the 599-residue chain is Elongation factor 4 (599 aa).

One can recognise a tr-type G domain in the interval 5–187 (NRIRNFSIVA…AIVTRLPAPK (183 aa)). Residues 17 to 22 (DHGKST) and 134 to 137 (NKVD) contribute to the GTP site.

The protein belongs to the TRAFAC class translation factor GTPase superfamily. Classic translation factor GTPase family. LepA subfamily.

The protein resides in the cell inner membrane. It catalyses the reaction GTP + H2O = GDP + phosphate + H(+). Required for accurate and efficient protein synthesis under certain stress conditions. May act as a fidelity factor of the translation reaction, by catalyzing a one-codon backward translocation of tRNAs on improperly translocated ribosomes. Back-translocation proceeds from a post-translocation (POST) complex to a pre-translocation (PRE) complex, thus giving elongation factor G a second chance to translocate the tRNAs correctly. Binds to ribosomes in a GTP-dependent manner. This chain is Elongation factor 4, found in Jannaschia sp. (strain CCS1).